The primary structure comprises 406 residues: Sprouty-related, EVH1 domain-containing protein 1 (406 aa).

Positions 3-120 (GEQEPDDSYA…RGIRRAIEDL (118 aa)) constitute a WH1 domain. The segment at 124 to 154 (LPASCHGESETSEDGPQVNKEDHYSTHNNDH) is disordered. The span at 142–154 (NKEDHYSTHNNDH) shows a compositional bias: basic and acidic residues. In terms of domain architecture, KBD spans 195 to 247 (PIRHVSFQDEDEIVRINPRDMIIRRYADYRHPDIFRNDVDREEPEDVTFFTKT). The SPR domain maps to 296 to 404 (SCVYCQERFN…CGCCGGKHKA (109 aa)).

Palmitoylated by ZDHHC17/HIP14. In terms of processing, ubiquitinated. Post-translationally, phosphorylated on tyrosine.

It localises to the cell membrane. Functionally, tyrosine kinase substrate that inhibits growth-factor-mediated activation of MAP kinase. The protein is Sprouty-related, EVH1 domain-containing protein 1 (spred1) of Xenopus tropicalis (Western clawed frog).